Consider the following 391-residue polypeptide: Glycerol-3-phosphate dehydrogenase [NAD(+)] (391 aa).

Residues 46 to 51, F78, and F134 contribute to the NAD(+) site; that span reads GSGNWG. K157 contacts substrate. Residue A190 coordinates NAD(+). Residue K250 is the Proton acceptor of the active site. Residues R315 and Q344 each contribute to the NAD(+) site. 315 to 316 serves as a coordination point for substrate; that stretch reads RN.

It belongs to the NAD-dependent glycerol-3-phosphate dehydrogenase family.

The catalysed reaction is sn-glycerol 3-phosphate + NAD(+) = dihydroxyacetone phosphate + NADH + H(+). The polypeptide is Glycerol-3-phosphate dehydrogenase [NAD(+)] (GPD) (Candida tropicalis (Yeast)).